The chain runs to 312 residues: Gamma-soluble NSF attachment protein (312 aa).

A disordered region spans residues 281 to 312 (KKKAAAPPQAKPEGTAAPAAEEEEDEYAGGLC). Over residues 285–299 (AAPPQAKPEGTAAPA) the composition is skewed to low complexity. Positions 300 to 312 (AEEEEDEYAGGLC) are enriched in acidic residues.

The protein belongs to the SNAP family. As to quaternary structure, interacts with RAB11FIP5. Interacts with VTI1A.

The protein resides in the membrane. The protein localises to the golgi apparatus. Required for vesicular transport between the endoplasmic reticulum and the Golgi apparatus. The polypeptide is Gamma-soluble NSF attachment protein (Bos taurus (Bovine)).